The sequence spans 582 residues: DNA polymerase IV (582 aa).

Positions 127–161 are disordered; the sequence is NADDGQSSTDKESEISTDVESERNDDSNNKDMIQA. Residues 135–155 show a composition bias toward basic and acidic residues; the sequence is TDKESEISTDVESERNDDSNN. Residues 360-369 are involved in ssDNA binding; the sequence is RGYSKCGDID. The Mg(2+) site is built by D367, D369, and D502.

The protein belongs to the DNA polymerase type-X family. As to quaternary structure, interacts with DNL4 subunit of the DNL4-LIF1 complex. Requires Mg(2+) as cofactor.

It localises to the nucleus. The catalysed reaction is DNA(n) + a 2'-deoxyribonucleoside 5'-triphosphate = DNA(n+1) + diphosphate. With respect to regulation, stimulated by the interaction with the DNL4-LIF1 complex. In terms of biological role, repair polymerase. Involved in gap-filling in DNA nonhomologous end joining (NHEJ) required for double-strand break repair. Seems to conduct DNA synthesis in a stepwise distributive fashion rather than in a processive fashion as for other DNA polymerases. Preferentially acts upon short gaps formed by the alignment of linear duplexes with complementary single-strand ends. Required for filling gaps that need removal of a 5'- or 3'-terminal mismatch, however lacks nuclease activities. This Saccharomyces cerevisiae (strain ATCC 204508 / S288c) (Baker's yeast) protein is DNA polymerase IV (POL4).